Consider the following 431-residue polypeptide: Adenylosuccinate synthetase 2 (431 aa).

GTP-binding positions include 13-19 and 41-43; these read GDEGKGK and GHT. Catalysis depends on D14, which acts as the Proton acceptor. Mg(2+) contacts are provided by D14 and G41. IMP-binding positions include 14–17, 39–42, T130, R144, Q225, T240, and R304; these read DEGK and NAGH. H42 acts as the Proton donor in catalysis. 300 to 306 is a substrate binding site; that stretch reads SVTGRPR. GTP is bound by residues R306, 332-334, and 414-416; these read KLD and STG.

The protein belongs to the adenylosuccinate synthetase family. As to quaternary structure, homodimer. Mg(2+) serves as cofactor.

Its subcellular location is the cytoplasm. It carries out the reaction IMP + L-aspartate + GTP = N(6)-(1,2-dicarboxyethyl)-AMP + GDP + phosphate + 2 H(+). It functions in the pathway purine metabolism; AMP biosynthesis via de novo pathway; AMP from IMP: step 1/2. Its function is as follows. Plays an important role in the de novo pathway of purine nucleotide biosynthesis. Catalyzes the first committed step in the biosynthesis of AMP from IMP. The polypeptide is Adenylosuccinate synthetase 2 (Chromobacterium violaceum (strain ATCC 12472 / DSM 30191 / JCM 1249 / CCUG 213 / NBRC 12614 / NCIMB 9131 / NCTC 9757 / MK)).